Consider the following 597-residue polypeptide: Arginine--tRNA ligase (597 aa).

The span at 23–32 (QAAAARQASQ) shows a compositional bias: low complexity. The interval 23 to 43 (QAAAARQASQPLDPQLAPASK) is disordered. Residues 137-147 (PNIAKEMHVGH) carry the 'HIGH' region motif.

It belongs to the class-I aminoacyl-tRNA synthetase family. In terms of assembly, monomer.

It localises to the cytoplasm. The enzyme catalyses tRNA(Arg) + L-arginine + ATP = L-arginyl-tRNA(Arg) + AMP + diphosphate. This is Arginine--tRNA ligase from Synechococcus sp. (strain WH7803).